The chain runs to 309 residues: Homoserine O-acetyltransferase (309 aa).

Cys142 acts as the Acyl-thioester intermediate in catalysis. Substrate is bound by residues Lys163 and Ser192. The active-site Proton acceptor is His235. Glu237 is a catalytic residue. Residue Arg249 participates in substrate binding.

The protein belongs to the MetA family.

Its subcellular location is the cytoplasm. It catalyses the reaction L-homoserine + acetyl-CoA = O-acetyl-L-homoserine + CoA. It functions in the pathway amino-acid biosynthesis; L-methionine biosynthesis via de novo pathway; O-acetyl-L-homoserine from L-homoserine: step 1/1. In terms of biological role, transfers an acetyl group from acetyl-CoA to L-homoserine, forming acetyl-L-homoserine. This is Homoserine O-acetyltransferase from Allorhizobium ampelinum (strain ATCC BAA-846 / DSM 112012 / S4) (Agrobacterium vitis (strain S4)).